A 111-amino-acid polypeptide reads, in one-letter code: Vacuolar ATPase assembly integral membrane protein VMA21 (111 aa).

Residues 1–39 lie on the Cytoplasmic side of the membrane; it reads MATRRIVATEKSILEKDDHIGSSPAAGEKSNITPAVPLD. The helical transmembrane segment at 40-60 threads the bilayer; sequence VILKLLAFTLAMVVIPIGSYF. Residues 61–73 lie on the Lumenal side of the membrane; that stretch reads VTVNSIFKGNSTY. The chain crosses the membrane as a helical span at residues 74-94; sequence AGALAAIMANVVLVAYVVVAM. Residues 95–111 lie on the Cytoplasmic side of the membrane; that stretch reads NEDQTEQEKAKEGKKDR. Positions 108 to 111 match the Prevents secretion from ER motif; the sequence is KKDR.

The protein belongs to the VMA21 family.

It localises to the endoplasmic reticulum membrane. The protein localises to the endoplasmic reticulum-Golgi intermediate compartment membrane. It is found in the cytoplasmic vesicle. Its subcellular location is the COPII-coated vesicle membrane. Required for the assembly of the V0 complex of the vacuolar ATPase (V-ATPase) in the endoplasmic reticulum. This Pyricularia oryzae (strain 70-15 / ATCC MYA-4617 / FGSC 8958) (Rice blast fungus) protein is Vacuolar ATPase assembly integral membrane protein VMA21.